Consider the following 289-residue polypeptide: Protein FraH (289 aa).

The DZANK-type zinc finger occupies 4-49; it reads CPNCNHPNPDGAVQCEACYTPLPATSNCPNCGATVQSDAAFCGQCG. Residues 18-48 fold into a zinc finger; the sequence is CEACYTPLPATSNCPNCGATVQSDAAFCGQC. In terms of domain architecture, FHA spans 204-260; sequence VHIGKPNDRIPPDVDVSGFANSEIVSRVHADIRLEGDAHYIEDVGSSNGTYINNLPL.

In terms of biological role, putative heterocyst to vegetative cell connection. The protein is Protein FraH (fraH) of Nostoc sp. (strain PCC 7120 / SAG 25.82 / UTEX 2576).